The following is a 256-amino-acid chain: MSEKRVEKKLIHYVKKALNDYHMINTGDRVMVCLSGGKDSYTLLSLLNSIRIEGNYKFDIFAFVLDQSQPGWDDSALRGWLDDKKIPYEILTRDTYSIVKEKIPAGKTYCSLCSRLRRGIIYRYAEEQGFSKIALGHHRDDLIQTLLMSVFYNGQIRSMPPKLLSDNKRHVLIRPLAYCQERDIIKYAMEQQFPLIPCNLCGSQKNLMRQRVKRLISDLAKENPKVPSNMLRALSNIKPSQLMDHELWNFRELNVD.

Positions 35–40 (SGGKDS) match the PP-loop motif motif. Residues Cys110, Cys113, and Cys201 each contribute to the [4Fe-4S] cluster site.

This sequence belongs to the TtcA family. Homodimer. Mg(2+) is required as a cofactor. The cofactor is [4Fe-4S] cluster.

Its subcellular location is the cytoplasm. It carries out the reaction cytidine(32) in tRNA + S-sulfanyl-L-cysteinyl-[cysteine desulfurase] + AH2 + ATP = 2-thiocytidine(32) in tRNA + L-cysteinyl-[cysteine desulfurase] + A + AMP + diphosphate + H(+). It participates in tRNA modification. In terms of biological role, catalyzes the ATP-dependent 2-thiolation of cytidine in position 32 of tRNA, to form 2-thiocytidine (s(2)C32). The sulfur atoms are provided by the cysteine/cysteine desulfurase (IscS) system. This Coxiella burnetii (strain Dugway 5J108-111) protein is tRNA-cytidine(32) 2-sulfurtransferase.